The sequence spans 77 residues: Acyl carrier protein (77 aa).

The Carrier domain maps to 1-76 (MSVEQRVKEI…DVLDYIKSKQ (76 aa)). Position 36 is an O-(pantetheine 4'-phosphoryl)serine (serine 36).

It belongs to the acyl carrier protein (ACP) family. In terms of processing, 4'-phosphopantetheine is transferred from CoA to a specific serine of apo-ACP by AcpS. This modification is essential for activity because fatty acids are bound in thioester linkage to the sulfhydryl of the prosthetic group.

The protein localises to the cytoplasm. It participates in lipid metabolism; fatty acid biosynthesis. Functionally, carrier of the growing fatty acid chain in fatty acid biosynthesis. This is Acyl carrier protein from Sulfurihydrogenibium sp. (strain YO3AOP1).